The sequence spans 428 residues: Enolase (428 aa).

(2R)-2-phosphoglycerate is bound at residue Q173. The active-site Proton donor is the E217. Mg(2+) contacts are provided by D253, E294, and D320. Positions 345, 374, 375, and 396 each coordinate (2R)-2-phosphoglycerate. The Proton acceptor role is filled by K345.

It belongs to the enolase family. The cofactor is Mg(2+).

The protein localises to the cytoplasm. It localises to the secreted. Its subcellular location is the cell surface. It catalyses the reaction (2R)-2-phosphoglycerate = phosphoenolpyruvate + H2O. The protein operates within carbohydrate degradation; glycolysis; pyruvate from D-glyceraldehyde 3-phosphate: step 4/5. In terms of biological role, catalyzes the reversible conversion of 2-phosphoglycerate (2-PG) into phosphoenolpyruvate (PEP). It is essential for the degradation of carbohydrates via glycolysis. The sequence is that of Enolase from Methanosarcina mazei (strain ATCC BAA-159 / DSM 3647 / Goe1 / Go1 / JCM 11833 / OCM 88) (Methanosarcina frisia).